A 414-amino-acid chain; its full sequence is V-set and immunoglobulin domain-containing protein 8 (414 aa).

A signal peptide spans M1–A21. 2 consecutive Ig-like V-type domains span residues V22–T141 and P146–S257. Residues V22–G263 lie on the Extracellular side of the membrane. Disulfide bonds link C44–C126 and C167–C239. Residues V264–W284 traverse the membrane as a helical segment. The Cytoplasmic segment spans residues G285–V414.

Its subcellular location is the membrane. The polypeptide is V-set and immunoglobulin domain-containing protein 8 (Homo sapiens (Human)).